We begin with the raw amino-acid sequence, 82 residues long: Small ribosomal subunit protein bS20 (82 aa).

Residues 1 to 29 (MPNIKSAKKDLRRSRAAAVRNRAQRSALR) are disordered. Positions 16–29 (AAAVRNRAQRSALR) are enriched in low complexity.

It belongs to the bacterial ribosomal protein bS20 family.

Binds directly to 16S ribosomal RNA. The polypeptide is Small ribosomal subunit protein bS20 (Gemmatimonas aurantiaca (strain DSM 14586 / JCM 11422 / NBRC 100505 / T-27)).